A 418-amino-acid chain; its full sequence is Type II methyltransferase M.MspI (418 aa).

The SAM-dependent MTase C5-type domain maps to 105-404 (FKFIDLFSGI…EQISLALKTV (300 aa)). The active site involves Cys174.

It belongs to the class I-like SAM-binding methyltransferase superfamily. C5-methyltransferase family.

The enzyme catalyses a 2'-deoxycytidine in DNA + S-adenosyl-L-methionine = a 5-methyl-2'-deoxycytidine in DNA + S-adenosyl-L-homocysteine + H(+). A methylase, recognizes the double-stranded sequence 5'-CCGG-3', methylates C-1 on both strands, and protects the DNA from cleavage by the MspI endonuclease. This chain is Type II methyltransferase M.MspI (mspIM), found in Moraxella sp.